The chain runs to 191 residues: Lipopolysaccharide export system protein LptC (191 aa).

Residues 7–25 form a helical membrane-spanning segment; it reads WVIIVLSLAVLVMIGINMA.

It belongs to the LptC family. As to quaternary structure, component of the lipopolysaccharide transport and assembly complex. Interacts with LptA and the LptBFG transporter complex.

The protein localises to the cell inner membrane. Functionally, involved in the assembly of lipopolysaccharide (LPS). Required for the translocation of LPS from the inner membrane to the outer membrane. Facilitates the transfer of LPS from the inner membrane to the periplasmic protein LptA. Could be a docking site for LptA. The polypeptide is Lipopolysaccharide export system protein LptC (Escherichia coli O157:H7).